A 248-amino-acid chain; its full sequence is Triosephosphate isomerase (248 aa).

Residue 9–11 (NWK) participates in substrate binding. His-94 functions as the Electrophile in the catalytic mechanism. The Proton acceptor role is filled by Glu-166. Substrate-binding positions include Gly-172, Ser-212, and 233 to 234 (GG).

Belongs to the triosephosphate isomerase family. Homodimer.

It is found in the cytoplasm. It catalyses the reaction D-glyceraldehyde 3-phosphate = dihydroxyacetone phosphate. It functions in the pathway carbohydrate biosynthesis; gluconeogenesis. The protein operates within carbohydrate degradation; glycolysis; D-glyceraldehyde 3-phosphate from glycerone phosphate: step 1/1. In terms of biological role, involved in the gluconeogenesis. Catalyzes stereospecifically the conversion of dihydroxyacetone phosphate (DHAP) to D-glyceraldehyde-3-phosphate (G3P). In Clostridium botulinum (strain Okra / Type B1), this protein is Triosephosphate isomerase.